The sequence spans 133 residues: Small ribosomal subunit protein uS8 (133 aa).

The protein belongs to the universal ribosomal protein uS8 family. Part of the 30S ribosomal subunit. Contacts proteins S5 and S12.

One of the primary rRNA binding proteins, it binds directly to 16S rRNA central domain where it helps coordinate assembly of the platform of the 30S subunit. This chain is Small ribosomal subunit protein uS8, found in Oenococcus oeni (strain ATCC BAA-331 / PSU-1).